Here is a 32-residue protein sequence, read N- to C-terminus: Protamine-3A (32 aa).

The tract at residues Pro1–Arg32 is disordered.

In terms of tissue distribution, testis.

Its subcellular location is the nucleus. The protein localises to the chromosome. In terms of biological role, protamines substitute for histones in the chromatin of sperm during the haploid phase of spermatogenesis. They compact sperm DNA into a highly condensed, stable and inactive complex. The chain is Protamine-3A from Oncorhynchus mykiss (Rainbow trout).